The following is a 239-amino-acid chain: 7-cyano-7-deazaguanine synthase (239 aa).

Position 7–17 (7–17) interacts with ATP; that stretch reads LSGGIDSSTLL. Zn(2+) is bound by residues C184, C192, C195, and C198.

This sequence belongs to the QueC family. Requires Zn(2+) as cofactor.

It carries out the reaction 7-carboxy-7-deazaguanine + NH4(+) + ATP = 7-cyano-7-deazaguanine + ADP + phosphate + H2O + H(+). It functions in the pathway purine metabolism; 7-cyano-7-deazaguanine biosynthesis. In terms of biological role, catalyzes the ATP-dependent conversion of 7-carboxy-7-deazaguanine (CDG) to 7-cyano-7-deazaguanine (preQ(0)). This is 7-cyano-7-deazaguanine synthase from Archaeoglobus fulgidus (strain ATCC 49558 / DSM 4304 / JCM 9628 / NBRC 100126 / VC-16).